The chain runs to 576 residues: Nuclear/nucleolar GTPase 2 (576 aa).

2 disordered regions span residues 1 to 61 (MVKK…SNEY) and 166 to 186 (QDAF…EEED). Residues 16-34 (HSLDANRADGKKKTTETRS) are compositionally biased toward basic and acidic residues. Over residues 42–52 (KMYKTRPKRNA) the composition is skewed to basic residues. A CP-type G domain is found at 206 to 367 (WGELYKVIDS…LIDCPGVVYQ (162 aa)). The DARXP motif signature appears at 224 to 228 (DARDP). The segment at 254–257 (NKCD) is G4. 254-257 (NKCD) serves as a coordination point for GTP. The segment at 283–285 (SVN) is G5. The segment at 316–323 (GYPNVGKS) is G1. Residue 319 to 324 (NVGKSS) coordinates GTP. A G2 region spans residues 342–346 (GETKV). The G3 stretch occupies residues 360–363 (DCPG). G363 is a GTP binding site. A disordered region spans residues 502-576 (TQQQKDVPVQ…DEEDESDSAE (75 aa)). The span at 509 to 530 (PVQRDFYDEKDLKDDKKAKEST) shows a compositional bias: basic and acidic residues. Positions 531 to 576 (ETDAENGTDAEEDEDAVSEDGVESDSDADEDAVSENDEEDESDSAE) are enriched in acidic residues.

Belongs to the TRAFAC class YlqF/YawG GTPase family. RsgA subfamily. Interacts with the 60S ribosomal proteins RPL10AA, RPL10AB and RPL10AC. In terms of tissue distribution, ubiquitous, with higher levels in meristematic regions.

Its subcellular location is the nucleus. It localises to the nucleolus. Its activity is regulated as follows. The GTPase activity is stimulated in the presence of the 60S ribosomal subunit. In terms of biological role, GTPase involved in pre-60S ribosomal subunit maturation. The chain is Nuclear/nucleolar GTPase 2 from Arabidopsis thaliana (Mouse-ear cress).